Here is a 78-residue protein sequence, read N- to C-terminus: Small ribosomal subunit protein bS20 (78 aa).

It belongs to the bacterial ribosomal protein bS20 family.

Functionally, binds directly to 16S ribosomal RNA. This Streptococcus pneumoniae serotype 19F (strain G54) protein is Small ribosomal subunit protein bS20.